A 247-amino-acid polypeptide reads, in one-letter code: Orotidine 5'-phosphate decarboxylase (247 aa).

Substrate is bound by residues Asp-16, Lys-38, 66–75 (DLKFHDIPNT), Thr-130, Arg-191, Gln-200, Gly-220, and Arg-221. Lys-68 functions as the Proton donor in the catalytic mechanism.

This sequence belongs to the OMP decarboxylase family. Type 1 subfamily. As to quaternary structure, homodimer.

It carries out the reaction orotidine 5'-phosphate + H(+) = UMP + CO2. It participates in pyrimidine metabolism; UMP biosynthesis via de novo pathway; UMP from orotate: step 2/2. In terms of biological role, catalyzes the decarboxylation of orotidine 5'-monophosphate (OMP) to uridine 5'-monophosphate (UMP). The polypeptide is Orotidine 5'-phosphate decarboxylase (Rhodospirillum rubrum (strain ATCC 11170 / ATH 1.1.1 / DSM 467 / LMG 4362 / NCIMB 8255 / S1)).